Consider the following 473-residue polypeptide: Photosystem II CP43 reaction center protein (473 aa).

The propeptide occupies 1 to 14; the sequence is MKTLYSLRRFYPVE. Position 15 is an N-acetylthreonine (Thr15). Position 15 is a phosphothreonine (Thr15). 5 consecutive transmembrane segments (helical) span residues 69-93, 134-155, 178-200, 255-275, and 291-312; these read LFEV…PHLA, LLGP…KDRN, KALY…RRIT, KPFA…LSYS, and WFNN…ASQA. Residue Glu367 coordinates [CaMn4O5] cluster. A helical membrane pass occupies residues 447 to 471; sequence RARAAAAGFEKGIDRDFEPVLSMTP.

This sequence belongs to the PsbB/PsbC family. PsbC subfamily. In terms of assembly, PSII is composed of 1 copy each of membrane proteins PsbA, PsbB, PsbC, PsbD, PsbE, PsbF, PsbH, PsbI, PsbJ, PsbK, PsbL, PsbM, PsbT, PsbX, PsbY, PsbZ, Psb30/Ycf12, at least 3 peripheral proteins of the oxygen-evolving complex and a large number of cofactors. It forms dimeric complexes. It depends on Binds multiple chlorophylls and provides some of the ligands for the Ca-4Mn-5O cluster of the oxygen-evolving complex. It may also provide a ligand for a Cl- that is required for oxygen evolution. PSII binds additional chlorophylls, carotenoids and specific lipids. as a cofactor.

It is found in the plastid. The protein resides in the chloroplast thylakoid membrane. Functionally, one of the components of the core complex of photosystem II (PSII). It binds chlorophyll and helps catalyze the primary light-induced photochemical processes of PSII. PSII is a light-driven water:plastoquinone oxidoreductase, using light energy to abstract electrons from H(2)O, generating O(2) and a proton gradient subsequently used for ATP formation. The sequence is that of Photosystem II CP43 reaction center protein from Illicium oligandrum (Star anise).